The sequence spans 1377 residues: Pleckstrin homology-like domain family B member 1 (1377 aa).

At Ser-51 the chain carries Phosphoserine. The 62-residue stretch at 64 to 125 (TVIGSAARDI…LTQGCMLCLG (62 aa)) folds into the FHA domain. Arg-131 is subject to Asymmetric dimethylarginine. Positions 150–187 (RAPGPPYSPVPAESESLVNGNHTPQTATRGPSACASHS) are disordered. The span at 165-178 (SLVNGNHTPQTATR) shows a compositional bias: polar residues. Residues Ser-192, Ser-220, and Ser-223 each carry the phosphoserine modification. Disordered regions lie at residues 211-334 (AAGK…LTDS) and 370-535 (GALS…GSFS). The segment covering 252 to 273 (SPAFSPLSSPASSGSCASHSPS) has biased composition (low complexity). Over residues 288 to 303 (RSSSYHLALQPPQSRP) the composition is skewed to polar residues. A compositionally biased stretch (basic and acidic residues) spans 309 to 322 (ESPRLSRKGGHERP). Phosphoserine is present on residues Ser-324, Ser-334, Ser-381, Ser-404, Ser-430, Ser-443, Ser-461, Ser-470, Ser-489, and Ser-501. Low complexity predominate over residues 456-473 (ELPPLSPSLSRRALSPLP). The segment covering 481–491 (KLNREVAESPR) has biased composition (basic and acidic residues). Omega-N-methylarginine is present on Arg-512. Phosphoserine occurs at positions 518 and 520. Residue Thr-522 is modified to Phosphothreonine. Phosphoserine is present on residues Ser-533, Ser-539, Ser-551, Ser-555, Ser-563, Ser-578, and Ser-583. A compositionally biased stretch (low complexity) spans 653–663 (PSRGLAGASGR). Disordered regions lie at residues 653–707 (PSRG…APST), 936–1019 (TGPA…GSLP), and 1119–1138 (SMETSISTGGNSACSPDNMS). Positions 677-691 (ESMERSDEENLKEEC) are enriched in basic and acidic residues. Residue Ser-678 is modified to Phosphoserine. A coiled-coil region spans residues 683–809 (DEENLKEECS…TETKLFEDLE (127 aa)). Phosphoserine is present on residues Ser-971 and Ser-1017. The span at 971-992 (SPLPRTRSGPLPSSSGSSSSSS) shows a compositional bias: low complexity. Positions 1009 to 1018 (LLTQNGTGSL) are enriched in polar residues. Positions 1144-1208 (DMGKIEEMEK…ARRQQLVEKE (65 aa)) form a coiled coil. A PH domain is found at 1256 to 1370 (SKVCRGYLVK…WMDVIVTGAE (115 aa)).

The sequence is that of Pleckstrin homology-like domain family B member 1 (PHLDB1) from Homo sapiens (Human).